A 312-amino-acid polypeptide reads, in one-letter code: Glycerol-3-phosphate dehydrogenase [NAD(P)+] (312 aa).

4 residues coordinate NADPH: tryptophan 11, arginine 30, arginine 31, and lysine 95. Sn-glycerol 3-phosphate-binding residues include lysine 95, glycine 123, and serine 125. Alanine 127 contributes to the NADPH binding site. Lysine 177, aspartate 230, serine 240, arginine 241, and asparagine 242 together coordinate sn-glycerol 3-phosphate. The active-site Proton acceptor is lysine 177. Arginine 241 serves as a coordination point for NADPH. NADPH is bound by residues valine 265 and glutamate 267.

It belongs to the NAD-dependent glycerol-3-phosphate dehydrogenase family.

It localises to the cytoplasm. It carries out the reaction sn-glycerol 3-phosphate + NAD(+) = dihydroxyacetone phosphate + NADH + H(+). The enzyme catalyses sn-glycerol 3-phosphate + NADP(+) = dihydroxyacetone phosphate + NADPH + H(+). It participates in membrane lipid metabolism; glycerophospholipid metabolism. Catalyzes the reduction of the glycolytic intermediate dihydroxyacetone phosphate (DHAP) to sn-glycerol 3-phosphate (G3P), the key precursor for phospholipid synthesis. The polypeptide is Glycerol-3-phosphate dehydrogenase [NAD(P)+] (Helicobacter pylori (strain P12)).